The sequence spans 123 residues: Small ribosomal subunit protein uS13 (123 aa).

A disordered region spans residues 95–123; that stretch reads GLPVRGQKTKTNARTRKGPKRAISGKKNK.

This sequence belongs to the universal ribosomal protein uS13 family. As to quaternary structure, part of the 30S ribosomal subunit. Forms a loose heterodimer with protein S19. Forms two bridges to the 50S subunit in the 70S ribosome.

Its function is as follows. Located at the top of the head of the 30S subunit, it contacts several helices of the 16S rRNA. In the 70S ribosome it contacts the 23S rRNA (bridge B1a) and protein L5 of the 50S subunit (bridge B1b), connecting the 2 subunits; these bridges are implicated in subunit movement. Contacts the tRNAs in the A and P-sites. This is Small ribosomal subunit protein uS13 from Clostridium novyi (strain NT).